Consider the following 241-residue polypeptide: ATP synthase subunit a (241 aa).

5 helical membrane passes run 30 to 50 (GQVF…ISVG), 91 to 111 (FIGT…LIPW), 128 to 148 (INTT…AGLS), 193 to 213 (LVVG…VMFL), and 214 to 234 (GLFT…YYIG).

It belongs to the ATPase A chain family. F-type ATPases have 2 components, CF(1) - the catalytic core - and CF(0) - the membrane proton channel. CF(1) has five subunits: alpha(3), beta(3), gamma(1), delta(1), epsilon(1). CF(0) has four main subunits: a, b, b' and c.

Its subcellular location is the cellular thylakoid membrane. Key component of the proton channel; it plays a direct role in the translocation of protons across the membrane. The chain is ATP synthase subunit a from Prochlorococcus marinus subsp. pastoris (strain CCMP1986 / NIES-2087 / MED4).